Reading from the N-terminus, the 144-residue chain is Putative pre-16S rRNA nuclease (144 aa).

Belongs to the YqgF nuclease family.

The protein localises to the cytoplasm. Its function is as follows. Could be a nuclease involved in processing of the 5'-end of pre-16S rRNA. This is Putative pre-16S rRNA nuclease from Chlorobium phaeobacteroides (strain BS1).